Consider the following 50-residue polypeptide: MGKKSKAKKKRLGKLEKQNSRVPAWVMLKTNMEVTRNPKRRNWRRSDTDE.

The segment covering 1–12 (MGKKSKAKKKRL) has biased composition (basic residues). The segment at 1–21 (MGKKSKAKKKRLGKLEKQNSR) is disordered.

The protein belongs to the eukaryotic ribosomal protein eL39 family.

The sequence is that of Large ribosomal subunit protein eL39 from Haloquadratum walsbyi (strain DSM 16790 / HBSQ001).